A 579-amino-acid polypeptide reads, in one-letter code: Multidrug resistance-like ATP-binding protein MdlA (579 aa).

The 286-residue stretch at 18–303 (YTIAIFLLIS…FAWMFNIIER (286 aa)) folds into the ABC transmembrane type-1 domain. 6 consecutive transmembrane segments (helical) span residues 20–40 (IAIF…KLIG), 53–73 (KAPI…IYIL), 134–154 (GVLT…VMIT), 155–175 (QISW…AIII), 247–267 (IIHL…SYMI), and 281–301 (ILYL…FNII). The region spanning 338 to 572 (VKINYFKYSK…LKQWYGKTYL (235 aa)) is the ABC transporter domain. 370–377 (GPTGSGKS) is a binding site for ATP.

It belongs to the ABC transporter superfamily. Drug exporter-2 (TC 3.A.1.117) family.

Its subcellular location is the cell membrane. It catalyses the reaction ATP + H2O + xenobioticSide 1 = ADP + phosphate + xenobioticSide 2.. This Buchnera aphidicola subsp. Baizongia pistaciae (strain Bp) protein is Multidrug resistance-like ATP-binding protein MdlA (mdlA).